A 1399-amino-acid chain; its full sequence is DNA-directed RNA polymerase subunit beta' (1399 aa).

Zn(2+) contacts are provided by C70, C72, C85, and C88. Residues D460, D462, and D464 each coordinate Mg(2+). Residues C814, C888, C895, and C898 each contribute to the Zn(2+) site. The segment at 1367 to 1399 is disordered; the sequence is SERKRQRDLGKPQRVSASEAEAALTEALNSSGN. A compositionally biased stretch (low complexity) spans 1382 to 1399; the sequence is SASEAEAALTEALNSSGN.

Belongs to the RNA polymerase beta' chain family. As to quaternary structure, the RNAP catalytic core consists of 2 alpha, 1 beta, 1 beta' and 1 omega subunit. When a sigma factor is associated with the core the holoenzyme is formed, which can initiate transcription. Mg(2+) is required as a cofactor. It depends on Zn(2+) as a cofactor.

The enzyme catalyses RNA(n) + a ribonucleoside 5'-triphosphate = RNA(n+1) + diphosphate. DNA-dependent RNA polymerase catalyzes the transcription of DNA into RNA using the four ribonucleoside triphosphates as substrates. This is DNA-directed RNA polymerase subunit beta' from Pseudomonas aeruginosa (strain UCBPP-PA14).